The primary structure comprises 494 residues: MRLSWKERVFMVLLGVAAASGLTMLILILVKATNVLLPADTKFGILFDAGSSHTSLFVYQWPANKEKDTGVVSQALACQVEGPGISSYTSDPTQAGESLKSCLQEALALIPQTQHPVTPAFLGATAGMRLLSQKNSSQAQDILAAVSQTLSRAPVDFWGARILAGQDEGAFGWITVNYVLGMLLKYSSGQWILPEDGTLVGALDLGGASTQISFVPQGPILDQSTQVTFRLYGANYSVYTHSYLCFGRDQILRRLLAELVQSSQVARVRHPCYHSGYQATLSLASLYDSPCVHTPDSLNYTQNLTVEGIGNPGNCVAALRGLFNFSSCKGQEDCAFNGVYQPPVHGQFYAFSNFYYTFQFLNLTSRQPLNIVNDTIWKFCQKPWRLVEDSYPGQERWLRDYCASGLYILVLLLEGYKFSEETWPNIQFQKQAGGTDIGWTLGFMLNLTGMIPAEALTQWRAQSYSIWIAGVVFAVLTLVAILGAAAVQLFWTQD.

Residues 1 to 8 (MRLSWKER) lie on the Cytoplasmic side of the membrane. The chain crosses the membrane as a helical span at residues 9–29 (VFMVLLGVAAASGLTMLILIL). The Extracellular segment spans residues 30–465 (VKATNVLLPA…LTQWRAQSYS (436 aa)). Cysteine 78 and cysteine 102 are joined by a disulfide. Catalysis depends on glutamate 168, which acts as the Proton acceptor. The cysteines at positions 245 and 291 are disulfide-linked. Asparagine 299 and asparagine 303 each carry an N-linked (GlcNAc...) asparagine glycan. An intrachain disulfide couples cysteine 328 to cysteine 334. N-linked (GlcNAc...) asparagine glycosylation occurs at asparagine 362. A disulfide bridge links cysteine 380 with cysteine 402. A helical membrane pass occupies residues 466–486 (IWIAGVVFAVLTLVAILGAAA). Residues 487–494 (VQLFWTQD) lie on the Cytoplasmic side of the membrane.

It belongs to the GDA1/CD39 NTPase family. Ca(2+) serves as cofactor. Requires Mg(2+) as cofactor. Post-translationally, N-glycosylated. As to expression, present in liver, and at lower level in jejunum and kidney. Limited to the canalicular domain of hepatocytes (at protein level).

The protein localises to the cell membrane. It catalyses the reaction a ribonucleoside 5'-triphosphate + 2 H2O = a ribonucleoside 5'-phosphate + 2 phosphate + 2 H(+). Its function is as follows. Canalicular ectonucleoside NTPDase responsible for the main hepatic NTPDase activity. Ectonucleoside NTPDases catalyze the hydrolysis of gamma- and beta-phosphate residues of nucleotides, playing a central role in concentration of extracellular nucleotides. Has activity toward ATP, ADP, UTP and UDP, but not toward AMP. This is Ectonucleoside triphosphate diphosphohydrolase 8 (Entpd8) from Rattus norvegicus (Rat).